Here is a 208-residue protein sequence, read N- to C-terminus: Thymidylate kinase (208 aa).

10–17 is a binding site for ATP; sequence GPEGSGKT.

Belongs to the thymidylate kinase family.

It carries out the reaction dTMP + ATP = dTDP + ADP. Functionally, phosphorylation of dTMP to form dTDP in both de novo and salvage pathways of dTTP synthesis. This is Thymidylate kinase from Bacillus cereus (strain AH187).